Consider the following 342-residue polypeptide: UDP-3-O-acylglucosamine N-acyltransferase (342 aa).

His-234 functions as the Proton acceptor in the catalytic mechanism.

It belongs to the transferase hexapeptide repeat family. LpxD subfamily. Homotrimer.

It carries out the reaction a UDP-3-O-[(3R)-3-hydroxyacyl]-alpha-D-glucosamine + a (3R)-hydroxyacyl-[ACP] = a UDP-2-N,3-O-bis[(3R)-3-hydroxyacyl]-alpha-D-glucosamine + holo-[ACP] + H(+). It participates in bacterial outer membrane biogenesis; LPS lipid A biosynthesis. Its function is as follows. Catalyzes the N-acylation of UDP-3-O-acylglucosamine using 3-hydroxyacyl-ACP as the acyl donor. Is involved in the biosynthesis of lipid A, a phosphorylated glycolipid that anchors the lipopolysaccharide to the outer membrane of the cell. The polypeptide is UDP-3-O-acylglucosamine N-acyltransferase (Oleidesulfovibrio alaskensis (strain ATCC BAA-1058 / DSM 17464 / G20) (Desulfovibrio alaskensis)).